The sequence spans 174 residues: MTVVEAIKMPNEHVFVPGGENSRSFRNALGAFTTGVTVVTATTPEGPIGMTVNSFASVSLDPPLVLWSPAKSSSRHPAFSEATHFAIHVLSADQDVLSARFTRNGRAFDDLDWEINDEGVPVIPGTLARFECRRAAAHDAGDHTIIVGEVLRAAHRDGDPLCFSGGAFGRFSRQ.

It belongs to the non-flavoprotein flavin reductase family.

It catalyses the reaction FMNH2 + NAD(+) = FMN + NADH + 2 H(+). Its function is as follows. Part of the sulfoquinovose monooxygenase (sulfo-SMO) pathway, a D-sulfoquinovose degradation pathway that enables the complete utilization of all carbons within sulfoquinovose (SQ) with concomitant production of inorganic sulfite. Catalyzes the NADH-dependent reduction of FMN. FMNH(2) is then transferred to the sulfoquinovose monooxygenase SmoC. The polypeptide is FMN reductase (NADH) SmoA (Agrobacterium fabrum (strain C58 / ATCC 33970) (Agrobacterium tumefaciens (strain C58))).